The following is an 831-amino-acid chain: DNA helicase MCM8 (831 aa).

A compositionally biased stretch (gly residues) spans 1–20 (MSQGWRGGSGGWRGGGGGNP). Residues 1 to 53 (MSQGWRGGSGGWRGGGGGNPYAGAWRGRPWRGRGQGGTWSRNNGRDPVCFAPP) form a disordered region. The 208-residue stretch at 395-602 (LFQLIVNSLC…DHDHLLSEHV (208 aa)) folds into the MCM domain. Residue 447 to 454 (GDPGLGKS) coordinates ATP.

This sequence belongs to the MCM family. Component of the MCM8-MCM9 complex, which forms a hexamer composed of mcm8 and mcm9.

It is found in the nucleus. It carries out the reaction ATP + H2O = ADP + phosphate + H(+). Component of the MCM8-MCM9 complex, a complex involved in homologous recombination repair following DNA interstrand cross-links and plays a key role during gametogenesis. The MCM8-MCM9 complex probably acts as a hexameric helicase required to process aberrant forks into homologous recombination substrates and to orchestrate homologous recombination with resection, fork stabilization and fork restart. In eggs, required for elongation during DNA replication by facilitating the recruitment of rpa2/rpa34 and stimulating the processivity of DNA polymerases at replication foci. Probably not required for DNA replication in other cells. In Xenopus laevis (African clawed frog), this protein is DNA helicase MCM8 (mcm8).